Here is a 1682-residue protein sequence, read N- to C-terminus: 1-phosphatidylinositol 4,5-bisphosphate phosphodiesterase eta-1 (1682 aa).

Residues Ser20–Ala128 form the PH domain. EF-hand domains follow at residues Thr142–Asn177, Leu178–Arg214, and Asp226–Met246. Residues Asp155, Asn157, Asp159, and Glu166 each contribute to the Ca(2+) site. The region spanning Gln299–Lys444 is the PI-PLC X-box domain. His314 is an active-site residue. 3 residues coordinate Ca(2+): Asn315, Glu344, and Asp346. Residue His358 is part of the active site. Glu393 contacts Ca(2+). Positions 442 and 444 each coordinate substrate. Residues Leu534 to Arg588 form a disordered region. Residues Gly553–Ser564 show a composition bias toward basic residues. Residues Leu602–Cys715 enclose the PI-PLC Y-box domain. 2 residues coordinate substrate: Ser628 and Arg655. The C2 domain occupies Lys716–Gly844. 6 residues coordinate Ca(2+): Ile759, Asp761, Asp785, Asp814, His815, and Asp816. Residues Asp992–His1018 show a composition bias toward basic and acidic residues. 3 disordered regions span residues Asp992–Arg1083, Asn1296–Val1321, and Arg1581–Val1603. Positions Phe1019–Leu1033 are enriched in low complexity. 2 stretches are compositionally biased toward polar residues: residues Gln1040–Glu1050 and Asn1065–His1074. Residues Arg1581–Lys1590 are compositionally biased toward basic and acidic residues.

It depends on Ca(2+) as a cofactor. Expressed in brain and to a lower extent in lung. In brain, it is found in cerebrum, cerebellum and spinal cord.

The protein localises to the cytoplasm. Its subcellular location is the membrane. The catalysed reaction is a 1,2-diacyl-sn-glycero-3-phospho-(1D-myo-inositol-4,5-bisphosphate) + H2O = 1D-myo-inositol 1,4,5-trisphosphate + a 1,2-diacyl-sn-glycerol + H(+). Functionally, the production of the second messenger molecules diacylglycerol (DAG) and inositol 1,4,5-trisphosphate (IP3) is mediated by calcium-activated phosphatidylinositol-specific phospholipase C enzymes. This is 1-phosphatidylinositol 4,5-bisphosphate phosphodiesterase eta-1 from Mus musculus (Mouse).